The sequence spans 308 residues: Isochorismatase domain-containing protein 1 (308 aa).

The protein belongs to the isochorismatase family.

The polypeptide is Isochorismatase domain-containing protein 1 (isoc1) (Xenopus tropicalis (Western clawed frog)).